The sequence spans 508 residues: Vacuolar serine-type carboxypeptidase ATG42 (508 aa).

An N-terminal signal peptide occupies residues 1–24; that stretch reads MKYLNLVFVLQLLISIKYASFGRA. Intrachain disulfides connect C132–C375, C267–C281, C291–C314, C298–C307, and C336–C345. The N-linked (GlcNAc...) asparagine glycan is linked to N163. S219 is a catalytic residue. N242 carries an N-linked (GlcNAc...) asparagine glycan. N-linked (GlcNAc...) asparagine glycans are attached at residues N339 and N371. The active site involves D415. Residue C418 participates in substrate binding. Residue H474 is part of the active site. M475 contacts substrate.

It belongs to the peptidase S10 family.

It localises to the vacuole lumen. It catalyses the reaction Release of a C-terminal amino acid with broad specificity.. Its function is as follows. Vacuolar serine-type carboxypeptidase involved in vacuolar zymogen activation, breakdown of the autophagic body, and autophagosome-dependent protein synthesis. Plays a key role in phytochelatin (PC) synthesis from glutathione (GSH) by cleaving the Gly from GSH and form the PC-peptides of the structure (gamma-Glu-Cys)2-Gly. Also involved in resistance to xenobiotics via the degradation of glutathione-S-conjugates. The sequence is that of Vacuolar serine-type carboxypeptidase ATG42 from Saccharomyces cerevisiae (strain ATCC 204508 / S288c) (Baker's yeast).